The primary structure comprises 91 residues: Cell division protein FtsB (91 aa).

At 1-3 (MRW) the chain is on the cytoplasmic side. Residues 4–21 (PVIILAVLVVVLQYPLWL) traverse the membrane as a helical segment. At 22-91 (GKGGWLRVWE…EIFVQVPQKH (70 aa)) the chain is on the periplasmic side. A coiled-coil region spans residues 28 to 72 (RVWEVDRKLHEQREENTRLEERNAGLDAEVRDLKSGNEAIEERAR).

Belongs to the FtsB family. In terms of assembly, part of a complex composed of FtsB, FtsL and FtsQ.

The protein resides in the cell inner membrane. Its function is as follows. Essential cell division protein. May link together the upstream cell division proteins, which are predominantly cytoplasmic, with the downstream cell division proteins, which are predominantly periplasmic. This Azoarcus sp. (strain BH72) protein is Cell division protein FtsB.